The primary structure comprises 116 residues: Putative iron-sulfur cluster insertion protein ErpA (116 aa).

The iron-sulfur cluster site is built by C44, C108, and C110.

The protein belongs to the HesB/IscA family. In terms of assembly, homodimer. Iron-sulfur cluster serves as cofactor.

Its function is as follows. Required for insertion of 4Fe-4S clusters. The polypeptide is Putative iron-sulfur cluster insertion protein ErpA (Herminiimonas arsenicoxydans).